Consider the following 1375-residue polypeptide: DNA-directed RNA polymerase subunit beta' (1375 aa).

Positions 1-158 are unknown; the sequence is MAKNEVLSLP…RVNKIIQPIR (158 aa). Residues 159 to 1353 form a DNA-directed RNA polymerase subunit beta' region; it reads KTYGSKAFTH…GGLIPAGTGI (1195 aa). Zn(2+) is bound by residues C219, C221, C233, and C236. Residues D607, D609, and D611 each contribute to the Mg(2+) site.

Belongs to the RNA polymerase beta' chain family. The RNAP catalytic core consists of 2 alpha, 1 beta, 1 beta' and 1 omega subunit. When a sigma factor is associated with the core the holoenzyme is formed, which can initiate transcription. Mg(2+) serves as cofactor. The cofactor is Zn(2+).

The catalysed reaction is RNA(n) + a ribonucleoside 5'-triphosphate = RNA(n+1) + diphosphate. DNA-dependent RNA polymerase catalyzes the transcription of DNA into RNA using the four ribonucleoside triphosphates as substrates. The chain is DNA-directed RNA polymerase subunit beta' from Acholeplasma laidlawii (strain PG-8A).